The following is a 287-amino-acid chain: Pantothenate synthetase (287 aa).

ATP is bound at residue 30–37; it reads MGNLHDGH. His-37 serves as the catalytic Proton donor. Gln-61 contributes to the (R)-pantoate binding site. Gln-61 contacts beta-alanine. 148 to 151 is a binding site for ATP; sequence GQKD. Gln-154 serves as a coordination point for (R)-pantoate. ATP contacts are provided by residues Ile-177 and 185-188; that span reads LSSR.

The protein belongs to the pantothenate synthetase family. In terms of assembly, homodimer.

The protein resides in the cytoplasm. It catalyses the reaction (R)-pantoate + beta-alanine + ATP = (R)-pantothenate + AMP + diphosphate + H(+). It participates in cofactor biosynthesis; (R)-pantothenate biosynthesis; (R)-pantothenate from (R)-pantoate and beta-alanine: step 1/1. Functionally, catalyzes the condensation of pantoate with beta-alanine in an ATP-dependent reaction via a pantoyl-adenylate intermediate. The sequence is that of Pantothenate synthetase from Psychrobacter cryohalolentis (strain ATCC BAA-1226 / DSM 17306 / VKM B-2378 / K5).